A 374-amino-acid polypeptide reads, in one-letter code: Putative glutamate--cysteine ligase 2 (374 aa).

The protein belongs to the glutamate--cysteine ligase type 2 family. YbdK subfamily.

The catalysed reaction is L-cysteine + L-glutamate + ATP = gamma-L-glutamyl-L-cysteine + ADP + phosphate + H(+). Its function is as follows. ATP-dependent carboxylate-amine ligase which exhibits weak glutamate--cysteine ligase activity. This is Putative glutamate--cysteine ligase 2 from Paracidovorax citrulli (strain AAC00-1) (Acidovorax citrulli).